The chain runs to 127 residues: Protein MGF 110-14L (127 aa).

A signal peptide spans 1 to 17; sequence MKVLLELLLGYSVHILA.

Belongs to the asfivirus MGF 110 family.

Plays a role in virus cell tropism, and may be required for efficient virus replication in macrophages. This is Protein MGF 110-14L from Ornithodoros (relapsing fever ticks).